We begin with the raw amino-acid sequence, 287 residues long: Pyridoxal 5'-phosphate synthase subunit PdxS (287 aa).

D-ribose 5-phosphate is bound at residue Asp-21. Lys-78 (schiff-base intermediate with D-ribose 5-phosphate) is an active-site residue. Gly-150 contacts D-ribose 5-phosphate. Arg-162 is a D-glyceraldehyde 3-phosphate binding site. D-ribose 5-phosphate contacts are provided by residues Gly-211 and 232-233 (GS).

It belongs to the PdxS/SNZ family. In terms of assembly, in the presence of PdxT, forms a dodecamer of heterodimers.

It carries out the reaction aldehydo-D-ribose 5-phosphate + D-glyceraldehyde 3-phosphate + L-glutamine = pyridoxal 5'-phosphate + L-glutamate + phosphate + 3 H2O + H(+). It functions in the pathway cofactor biosynthesis; pyridoxal 5'-phosphate biosynthesis. Its function is as follows. Catalyzes the formation of pyridoxal 5'-phosphate from ribose 5-phosphate (RBP), glyceraldehyde 3-phosphate (G3P) and ammonia. The ammonia is provided by the PdxT subunit. Can also use ribulose 5-phosphate and dihydroxyacetone phosphate as substrates, resulting from enzyme-catalyzed isomerization of RBP and G3P, respectively. The protein is Pyridoxal 5'-phosphate synthase subunit PdxS of Tropheryma whipplei (strain TW08/27) (Whipple's bacillus).